The primary structure comprises 420 residues: Gamma-glutamyl phosphate reductase 2 (420 aa).

Belongs to the gamma-glutamyl phosphate reductase family.

It is found in the cytoplasm. It catalyses the reaction L-glutamate 5-semialdehyde + phosphate + NADP(+) = L-glutamyl 5-phosphate + NADPH + H(+). It functions in the pathway amino-acid biosynthesis; L-proline biosynthesis; L-glutamate 5-semialdehyde from L-glutamate: step 2/2. Catalyzes the NADPH-dependent reduction of L-glutamate 5-phosphate into L-glutamate 5-semialdehyde and phosphate. The product spontaneously undergoes cyclization to form 1-pyrroline-5-carboxylate. The polypeptide is Gamma-glutamyl phosphate reductase 2 (Synechocystis sp. (strain ATCC 27184 / PCC 6803 / Kazusa)).